The chain runs to 334 residues: Holliday junction branch migration complex subunit RuvB (334 aa).

A large ATPase domain (RuvB-L) region spans residues 1-182; that stretch reads MDERLVSSEL…FGVLSRLEYY (182 aa). ATP is bound by residues Leu21, Arg22, Gly63, Lys66, Thr67, Thr68, 129-131, Arg172, Tyr182, and Arg219; that span reads EDF. Thr67 is a binding site for Mg(2+). The small ATPAse domain (RuvB-S) stretch occupies residues 183–253; that stretch reads TRDELSEIVI…VAVDALERLQ (71 aa). The interval 256–334 is head domain (RuvB-H); it reads KLGLDHIDRK…HFKMEVPNHD (79 aa). DNA-binding residues include Arg311 and Arg316.

This sequence belongs to the RuvB family. In terms of assembly, homohexamer. Forms an RuvA(8)-RuvB(12)-Holliday junction (HJ) complex. HJ DNA is sandwiched between 2 RuvA tetramers; dsDNA enters through RuvA and exits via RuvB. An RuvB hexamer assembles on each DNA strand where it exits the tetramer. Each RuvB hexamer is contacted by two RuvA subunits (via domain III) on 2 adjacent RuvB subunits; this complex drives branch migration. In the full resolvosome a probable DNA-RuvA(4)-RuvB(12)-RuvC(2) complex forms which resolves the HJ.

Its subcellular location is the cytoplasm. The enzyme catalyses ATP + H2O = ADP + phosphate + H(+). In terms of biological role, the RuvA-RuvB-RuvC complex processes Holliday junction (HJ) DNA during genetic recombination and DNA repair, while the RuvA-RuvB complex plays an important role in the rescue of blocked DNA replication forks via replication fork reversal (RFR). RuvA specifically binds to HJ cruciform DNA, conferring on it an open structure. The RuvB hexamer acts as an ATP-dependent pump, pulling dsDNA into and through the RuvAB complex. RuvB forms 2 homohexamers on either side of HJ DNA bound by 1 or 2 RuvA tetramers; 4 subunits per hexamer contact DNA at a time. Coordinated motions by a converter formed by DNA-disengaged RuvB subunits stimulates ATP hydrolysis and nucleotide exchange. Immobilization of the converter enables RuvB to convert the ATP-contained energy into a lever motion, pulling 2 nucleotides of DNA out of the RuvA tetramer per ATP hydrolyzed, thus driving DNA branch migration. The RuvB motors rotate together with the DNA substrate, which together with the progressing nucleotide cycle form the mechanistic basis for DNA recombination by continuous HJ branch migration. Branch migration allows RuvC to scan DNA until it finds its consensus sequence, where it cleaves and resolves cruciform DNA. The polypeptide is Holliday junction branch migration complex subunit RuvB (Bacillus licheniformis (strain ATCC 14580 / DSM 13 / JCM 2505 / CCUG 7422 / NBRC 12200 / NCIMB 9375 / NCTC 10341 / NRRL NRS-1264 / Gibson 46)).